The chain runs to 245 residues: Probable transcriptional regulatory protein MARTH_orf271 (245 aa).

This sequence belongs to the TACO1 family.

The protein localises to the cytoplasm. This chain is Probable transcriptional regulatory protein MARTH_orf271, found in Metamycoplasma arthritidis (strain 158L3-1) (Mycoplasma arthritidis).